A 184-amino-acid chain; its full sequence is MKIFESCHLFQYPFEQVSAAHWQKYPNEHATHVIAVDTLDRKVLDNGVLYTERLITCHQALPRWILKLIDGAQDCYIRETSYVDLKARTLTLLTSNLTFSDRLRVDETVTYSPHPELEATVFQQEARIEALACMKRLSNLIEQWSVDGFGKKASRGKEGFESVLEKINMSVFQTRPFGSSEATA.

Positions 1–172 (MKIFESCHLF…VLEKINMSVF (172 aa)) constitute a PRELI/MSF1 domain.

This sequence belongs to the slowmo family.

It is found in the cytoplasm. It localises to the mitochondrion inner membrane. Its subcellular location is the mitochondrion intermembrane space. In terms of biological role, required for mitochondrial morphology. May control phospholipid metabolism in the mitochondrial intermembrane space. The polypeptide is UPS-like protein C36.10 (Schizosaccharomyces pombe (strain 972 / ATCC 24843) (Fission yeast)).